A 309-amino-acid chain; its full sequence is Porphobilinogen deaminase (309 aa).

The residue at position 243 (C243) is an S-(dipyrrolylmethanemethyl)cysteine.

This sequence belongs to the HMBS family. As to quaternary structure, monomer. The cofactor is dipyrromethane.

It catalyses the reaction 4 porphobilinogen + H2O = hydroxymethylbilane + 4 NH4(+). It functions in the pathway porphyrin-containing compound metabolism; protoporphyrin-IX biosynthesis; coproporphyrinogen-III from 5-aminolevulinate: step 2/4. Functionally, tetrapolymerization of the monopyrrole PBG into the hydroxymethylbilane pre-uroporphyrinogen in several discrete steps. The polypeptide is Porphobilinogen deaminase (hemC) (Deinococcus radiodurans (strain ATCC 13939 / DSM 20539 / JCM 16871 / CCUG 27074 / LMG 4051 / NBRC 15346 / NCIMB 9279 / VKM B-1422 / R1)).